The chain runs to 487 residues: UL37 immediate early glycoprotein (487 aa).

Residues 1–22 (MSPVYVNLLGSVGLLAFWYFSY) form the signal peptide. Residues 83–107 (GEESVTEDTEREDTEEEREDEEEEN) are compositionally biased toward acidic residues. The interval 83–121 (GEESVTEDTEREDTEEEREDEEEENEARTPEVNPIDAEG) is disordered. 17 N-linked (GlcNAc...) asparagine; by host glycosylation sites follow: Asn206, Asn210, Asn219, Asn223, Asn242, Asn246, Asn275, Asn281, Asn294, Asn297, Asn306, Asn333, Asn337, Asn343, Asn379, Asn384, and Asn391. A helical transmembrane segment spans residues 433–459 (WALLSICTVAAGSIALLSLFCILLIGL).

Belongs to the immediate early glycoprotein family. Interacts with host BAX. Interacts with host RSAD2/viperin; this interaction results in RSAD2/viperin relocalization from the endoplasmic reticulum to the mitochondria, actin cytoskeleton disruption and enhancement of infection. Interacts with host PEX19; this interaction inhibits the peroxisomal-dependent antiviral signaling. Interacts with host CHCHD6; this interaction rewires mitochondria by engaging the conserved MICOS complex.

It is found in the host endoplasmic reticulum membrane. Its subcellular location is the host Golgi apparatus membrane. It localises to the host mitochondrion membrane. The protein resides in the host peroxisome. Functionally, multifunctional transmembrane protein that plays several key roles in viral replication. Rapidely traffics from the host endoplasmic reticulum to the outer mitochondrial membrane where it acts to inhibit host immune response, block apoptotic signaling, regulate calcium flux, and induce mitochondrial fragmentation. Sequesters proapoptotic BAX at the outer mitochondrial membrane and prevents cytochrome c release and subsequent initiation of the proapoptotic cascade. Also provoques a calcium efflux from host endoplasmic reticulum and F-actin cytoskeleton disruption. Participates in the increase of host mitochondrial biogenesis, thus promoting viral replication by efficient use of newly made mitochondria. Additionally, a subset of vMIA localizes to peroxisomes, causing fragmentation and blocking peroxisomal MAVS signaling. Mechanistically, inhibits host MAVS oligomerization at peroxisomes in a mitochondrial fission factors (MFF)-dependent manner and in mitochondria independently of mitochondrial fission factors. Plays an essential role in the trafficking of host viperin/RSAD2 from the endoplasmic reticulum to the viral assembly compartment via the mitochondria during viral infection as failure of viperin to localize to the mitochondria results in insufficient lipogenesis and thus reduces viral replication. In terms of biological role, may play a role in escape from the host antiviral response. The protein is UL37 immediate early glycoprotein (UL37) of Human cytomegalovirus (strain AD169) (HHV-5).